A 363-amino-acid polypeptide reads, in one-letter code: Hydroxycarboxylic acid receptor 2 (363 aa).

Residues 1–33 lie on the Extracellular side of the membrane; sequence MNRHHLQDHFLEIDKKNCCVFRDDFIVKVLPPV. A helical transmembrane segment spans residues 34-54; it reads LGLEFIFGLLGNGLALWIFCF. The Cytoplasmic segment spans residues 55–63; it reads HLKSWKSSR. A helical transmembrane segment spans residues 64–84; it reads IFLFNLAVADFLLIICLPFLM. The Extracellular segment spans residues 85–102; that stretch reads DNYVRRWDWKFGDIPCRL. C100 and C177 are oxidised to a cystine. A helical transmembrane segment spans residues 103–123; it reads MLFMLAMNRQGSIIFLTVVAV. Topologically, residues 124–142 are cytoplasmic; it reads DRYFRVVHPHHALNKISNR. The chain crosses the membrane as a helical span at residues 143-163; that stretch reads TAAIISCLLWGITIGLTVHLL. Topologically, residues 164–192 are extracellular; it reads KKKMPIQNGGANLCSSFSICHTFQWHEAM. A helical transmembrane segment spans residues 193–213; the sequence is FLLEFFLPLGIILFCSARIIW. At 214–229 the chain is on the cytoplasmic side; it reads SLRQRQMDRHAKIKRA. Residues 230-250 form a helical membrane-spanning segment; that stretch reads ITFIMVVAIVFVICFLPSVVV. Residues 251–273 lie on the Extracellular side of the membrane; it reads RIRIFWLLHTSGTQNCEVYRSVD. A helical transmembrane segment spans residues 274–294; the sequence is LAFFITLSFTYMNSMLDPVVY. Topologically, residues 295-363 are cytoplasmic; the sequence is YFSSPSFPNF…SPSYLGPTSP (69 aa). A disordered region spans residues 319-363; it reads GEPDNNRSTSVELTGDPNKTRGAPEALMANSGEPWSPSYLGPTSP. A Phosphoserine modification is found at S328.

Belongs to the G-protein coupled receptor 1 family. Expression largely restricted to adipose tissue and spleen. Expressed on mature neutrophils but not on immature neutrophils or eosinophils.

The protein resides in the cell membrane. In terms of biological role, acts as a high affinity receptor for both nicotinic acid (also known as niacin) and (D)-beta-hydroxybutyrate and mediates increased adiponectin secretion and decreased lipolysis through G(i)-protein-mediated inhibition of adenylyl cyclase. This pharmacological effect requires nicotinic acid doses that are much higher than those provided by a normal diet. Mediates nicotinic acid-induced apoptosis in mature neutrophils. Receptor activation by nicotinic acid results in reduced cAMP levels which may affect activity of cAMP-dependent protein kinase A and phosphorylation of target proteins, leading to neutrophil apoptosis. The rank order of potency for the displacement of nicotinic acid binding is 5-methyl pyrazole-3-carboxylic acid = pyridine-3-acetic acid &gt; acifran &gt; 5-methyl nicotinic acid = acipimox &gt;&gt; nicotinuric acid = nicotinamide. This Homo sapiens (Human) protein is Hydroxycarboxylic acid receptor 2 (HCAR2).